The sequence spans 438 residues: GTPase Der (438 aa).

EngA-type G domains are found at residues 4 to 168 and 177 to 352; these read PLVT…KSEG and IKIA…DNYS. GTP contacts are provided by residues 10 to 17, 57 to 61, 120 to 123, 183 to 190, 230 to 234, and 295 to 298; these read GRPNVGKS, DTGGI, NKID, GKPNVGKS, DTAGL, and NKWD. The KH-like domain maps to 353 to 437; that stretch reads KRIATGVLND…GIKMIFKERK (85 aa).

Belongs to the TRAFAC class TrmE-Era-EngA-EngB-Septin-like GTPase superfamily. EngA (Der) GTPase family. Associates with the 50S ribosomal subunit.

Its function is as follows. GTPase that plays an essential role in the late steps of ribosome biogenesis. This chain is GTPase Der, found in Clostridium acetobutylicum (strain ATCC 824 / DSM 792 / JCM 1419 / IAM 19013 / LMG 5710 / NBRC 13948 / NRRL B-527 / VKM B-1787 / 2291 / W).